The sequence spans 278 residues: Mediator of RNA polymerase II transcription subunit 4 (278 aa).

A coiled-coil region spans residues 57–88 (HARILTLRAQVEALEEQKKSSVTALATLRHEL). Disordered stretches follow at residues 120 to 181 (VPPT…EEEE) and 240 to 278 (VEAPPEPEPVAEPVQAQAPRPARPAQPQATFDMFDDLDD). Composition is skewed to basic and acidic residues over residues 124 to 142 (YRERAPEAASDKDRDKDDA) and 160 to 172 (DAPKDRDNADNKP). A compositionally biased stretch (low complexity) spans 250–268 (AEPVQAQAPRPARPAQPQA).

This sequence belongs to the Mediator complex subunit 4 family. In terms of assembly, component of the Mediator complex.

It is found in the nucleus. Its function is as follows. Component of the Mediator complex, a coactivator involved in the regulated transcription of nearly all RNA polymerase II-dependent genes. Mediator functions as a bridge to convey information from gene-specific regulatory proteins to the basal RNA polymerase II transcription machinery. Mediator is recruited to promoters by direct interactions with regulatory proteins and serves as a scaffold for the assembly of a functional preinitiation complex with RNA polymerase II and the general transcription factors. The polypeptide is Mediator of RNA polymerase II transcription subunit 4 (MED4) (Phaeosphaeria nodorum (strain SN15 / ATCC MYA-4574 / FGSC 10173) (Glume blotch fungus)).